A 1138-amino-acid chain; its full sequence is Tyrosine-protein kinase receptor Tie-1 (1138 aa).

The first 21 residues, 1–21 (MVWRVPPFLLPILFLASHVGA), serve as a signal peptide directing secretion. The Extracellular portion of the chain corresponds to 22-759 (AVDLTLLANL…SRAAEEGLDQ (738 aa)). Positions 43-105 (CVSGEAGAGR…PSDLVGVFSC (63 aa)) constitute an Ig-like C2-type 1 domain. 2 N-linked (GlcNAc...) asparagine glycosylation sites follow: asparagine 83 and asparagine 161. EGF-like domains are found at residues 214 to 256 (GCGA…TRCE), 258 to 303 (ACRE…SQCQ), and 305 to 345 (ACAP…VHCE). 3 cysteine pairs are disulfide-bonded: cysteine 228/cysteine 237, cysteine 231/cysteine 244, and cysteine 246/cysteine 255. Disulfide bonds link cysteine 315–cysteine 327, cysteine 321–cysteine 333, and cysteine 335–cysteine 344. The Ig-like C2-type 2 domain occupies 372 to 426 (CAAAGNPFPVRGSIELRKPDGTVLLSTKAIVEPEKTTAEFEVPRLVLADSGFWEC). 3 Fibronectin type-III domains span residues 446–545 (PPVP…CPEP), 548–642 (QPWL…LPPS), and 646–739 (APRH…TLGN). N-linked (GlcNAc...) asparagine glycans are attached at residues asparagine 503, asparagine 596, and asparagine 709. A helical transmembrane segment spans residues 760–784 (QLILAVVGSVSATCLTILAALLTLV). Residues 785–1138 (CIRRSCLHRR…AGIDATAEEA (354 aa)) are Cytoplasmic-facing. Residues 839–1118 (ITFEDLIGEG…RMLEARKAYV (280 aa)) enclose the Protein kinase domain. Residues 845–853 (IGEGNFGQV) and lysine 870 contribute to the ATP site. Aspartate 979 serves as the catalytic Proton acceptor. Position 1007 is a phosphotyrosine; by autocatalysis (tyrosine 1007).

Belongs to the protein kinase superfamily. Tyr protein kinase family. Tie subfamily. Heterodimer with TEK/TIE2. Interacts with SVEP1 (via C-terminus). Post-translationally, phosphorylated on tyrosine residues in response to ANGPT1, most likely by TEK/TIE2. Specifically expressed in developing vascular endothelial cells.

The protein resides in the cell membrane. The catalysed reaction is L-tyrosyl-[protein] + ATP = O-phospho-L-tyrosyl-[protein] + ADP + H(+). Transmembrane tyrosine-protein kinase that may modulate TEK/TIE2 activity and contribute to the regulation of angiogenesis. This is Tyrosine-protein kinase receptor Tie-1 (TIE1) from Homo sapiens (Human).